The following is a 74-amino-acid chain: MPVINIEDLTEKDKLKMEVDQLKKEVTLERMLVSKCCEEFRDYVEERSGEDPLVKGIPEDKNPFKELKGGCVIS.

At cysteine 71 the chain carries Cysteine methyl ester. Cysteine 71 carries S-farnesyl cysteine lipidation. The propeptide at 72-74 is removed in mature form; sequence VIS.

It belongs to the G protein gamma family. In terms of assembly, g proteins are composed of 3 units, alpha, beta and gamma. Retinal rod outer segment.

The protein resides in the cell membrane. Functionally, guanine nucleotide-binding proteins (G proteins) are involved as a modulator or transducer in various transmembrane signaling systems. The beta and gamma chains are required for the GTPase activity, for replacement of GDP by GTP, and for G protein-effector interaction. The sequence is that of Guanine nucleotide-binding protein G(T) subunit gamma-T1 (GNGT1) from Bos taurus (Bovine).